A 152-amino-acid polypeptide reads, in one-letter code: Ribosome maturation factor RimP (152 aa).

This sequence belongs to the RimP family.

Its subcellular location is the cytoplasm. Its function is as follows. Required for maturation of 30S ribosomal subunits. The polypeptide is Ribosome maturation factor RimP (Burkholderia multivorans (strain ATCC 17616 / 249)).